The following is an 880-amino-acid chain: Pyruvate, phosphate dikinase (880 aa).

Residues 1–348 form an N-terminal region; the sequence is MNKLIYYFGN…LYILQTRTAK (348 aa). Residue Arg97 participates in ATP binding. The segment at 349–405 is linker 1; the sequence is RTAIAAINIAVQMVKEKLISKEQALMRIDPESLNQLLHTRIDYSKGLTSIAEGLPAS. Residues 406–503 form a central region; that stretch reads PGAATGIVVF…VIKQGDIITI (98 aa). At Thr458 the chain carries Phosphothreonine; by PDRP1. The Tele-phosphohistidine intermediate role is filled by His460. Residues 504-538 form a linker 2 region; sequence DGGSGKIFLGEMPLIQPTFSEESKLILDWADEISS. Residues 539 to 880 are C-terminal; it reads LKVRANAETV…AAQAKIKQGS (342 aa). Residues Arg566, Arg622, Glu750, Gly771, Thr772, Asn773, and Asp774 each contribute to the substrate site. Residue Glu750 coordinates Mg(2+). Residue Asp774 participates in Mg(2+) binding. Cys836 (proton donor) is an active-site residue.

Belongs to the PEP-utilizing enzyme family. Homodimer. It depends on Mg(2+) as a cofactor. In terms of processing, phosphorylation of Thr-458 in the dark inactivates the enzyme. Dephosphorylation upon light stimulation reactivates the enzyme.

It carries out the reaction pyruvate + phosphate + ATP = phosphoenolpyruvate + AMP + diphosphate + H(+). With respect to regulation, activated by light-induced dephosphorylation. Inhibited by dark-induced phosphorylation. Both reactions are catalyzed by PDRP1. In terms of biological role, catalyzes the reversible phosphorylation of pyruvate and phosphate. In Rickettsia prowazekii (strain Madrid E), this protein is Pyruvate, phosphate dikinase (ppdK).